A 283-amino-acid chain; its full sequence is Polyamine aminopropyltransferase (283 aa).

The PABS domain occupies 5-240; the sequence is NTWFTEIHQD…GWWTATMACK (236 aa). Q33 contacts S-methyl-5'-thioadenosine. The spermidine site is built by H64 and D88. S-methyl-5'-thioadenosine contacts are provided by residues D108 and 139–140; that span reads DG. D158 (proton acceptor) is an active-site residue. 158-161 is a binding site for spermidine; sequence DSTD. P165 is an S-methyl-5'-thioadenosine binding site.

It belongs to the spermidine/spermine synthase family. As to quaternary structure, homodimer or homotetramer.

It is found in the cytoplasm. The enzyme catalyses S-adenosyl 3-(methylsulfanyl)propylamine + putrescine = S-methyl-5'-thioadenosine + spermidine + H(+). It functions in the pathway amine and polyamine biosynthesis; spermidine biosynthesis; spermidine from putrescine: step 1/1. In terms of biological role, catalyzes the irreversible transfer of a propylamine group from the amino donor S-adenosylmethioninamine (decarboxy-AdoMet) to putrescine (1,4-diaminobutane) to yield spermidine. This is Polyamine aminopropyltransferase from Thioalkalivibrio sulfidiphilus (strain HL-EbGR7).